Here is a 426-residue protein sequence, read N- to C-terminus: MNIISVGVNHKTAPIEIRERISLSEVQAKEFLSDIISSGIAQEAMVLSTCNRTELYVVPGMSEVTGHYLKEYLISYKNAEKEVRPEHFFNRFYCNTARHLFEVSSATDSLVLGEGQILGQVKNAYRIAVEEQSAGILLTRLCHTAFSVAKKVKTRTRIMEGAVSVSYAAVELAQKIFSNLSMKKILLVGAGETGELAAKHMFQKNARNIVITNRTMSKAEALAEELGTNQVLPFETFRDNLHEFDIIITAVSTKDYVLKAPDMHQSMQKRRLKPVIILDLGLPRNVDPEIRSLQNMFLKDIDDLKHIIDKNLEMRRSELPKVQEIIDEELVGFGQWINTLKVRPTIVDLQSKFLEIKEKELERYRHKVSDEELRRMERLSDRILKKILHHPIKMLKSPVDTADNIPSKVNLVRNIFDLEEQNQLKQ.

Residues Thr49–Arg52, Ser109, Glu114–Gln116, and Gln120 contribute to the substrate site. Cys50 functions as the Nucleophile in the catalytic mechanism. Gly189–Gly194 contacts NADP(+).

It belongs to the glutamyl-tRNA reductase family. In terms of assembly, homodimer.

It carries out the reaction (S)-4-amino-5-oxopentanoate + tRNA(Glu) + NADP(+) = L-glutamyl-tRNA(Glu) + NADPH + H(+). Its pathway is porphyrin-containing compound metabolism; protoporphyrin-IX biosynthesis; 5-aminolevulinate from L-glutamyl-tRNA(Glu): step 1/2. It participates in porphyrin-containing compound metabolism; chlorophyll biosynthesis. In terms of biological role, catalyzes the NADPH-dependent reduction of glutamyl-tRNA(Glu) to glutamate 1-semialdehyde (GSA). The chain is Glutamyl-tRNA reductase from Prosthecochloris aestuarii (strain DSM 271 / SK 413).